We begin with the raw amino-acid sequence, 293 residues long: 4-diphosphocytidyl-2-C-methyl-D-erythritol kinase (293 aa).

Lys-16 is an active-site residue. ATP is bound at residue 99–109 (PMGAGLGGGSS). Asp-141 is a catalytic residue.

This sequence belongs to the GHMP kinase family. IspE subfamily.

It carries out the reaction 4-CDP-2-C-methyl-D-erythritol + ATP = 4-CDP-2-C-methyl-D-erythritol 2-phosphate + ADP + H(+). Its pathway is isoprenoid biosynthesis; isopentenyl diphosphate biosynthesis via DXP pathway; isopentenyl diphosphate from 1-deoxy-D-xylulose 5-phosphate: step 3/6. Its function is as follows. Catalyzes the phosphorylation of the position 2 hydroxy group of 4-diphosphocytidyl-2C-methyl-D-erythritol. The sequence is that of 4-diphosphocytidyl-2-C-methyl-D-erythritol kinase from Paraburkholderia phymatum (strain DSM 17167 / CIP 108236 / LMG 21445 / STM815) (Burkholderia phymatum).